The primary structure comprises 198 residues: Small ribosomal subunit protein uS4c (198 aa).

The segment at 17–40 (TLPGLTSKRPKNRKDSMNRSSSRK) is disordered. The region spanning 88–154 (MRLDKSFSIG…IKKNIDLFQR (67 aa)) is the S4 RNA-binding domain.

The protein belongs to the universal ribosomal protein uS4 family. As to quaternary structure, part of the 30S ribosomal subunit. Contacts protein S5. The interaction surface between S4 and S5 is involved in control of translational fidelity.

Its subcellular location is the plastid. The protein localises to the chloroplast. Functionally, one of the primary rRNA binding proteins, it binds directly to 16S rRNA where it nucleates assembly of the body of the 30S subunit. Its function is as follows. With S5 and S12 plays an important role in translational accuracy. In Pinus thunbergii (Japanese black pine), this protein is Small ribosomal subunit protein uS4c (rps4).